The following is a 575-amino-acid chain: Homocysteine/cysteine synthase (575 aa).

Position 376 is an N6-(pyridoxal phosphate)lysine (Lys376).

It belongs to the trans-sulfuration enzymes family. MET7 subfamily. The cofactor is pyridoxal 5'-phosphate.

It localises to the cytoplasm. The catalysed reaction is O-acetyl-L-homoserine + methanethiol = L-methionine + acetate + H(+). It carries out the reaction O-acetyl-L-homoserine + hydrogen sulfide = L-homocysteine + acetate. The enzyme catalyses O-acetyl-L-serine + hydrogen sulfide = L-cysteine + acetate. It participates in amino-acid biosynthesis; L-methionine biosynthesis via de novo pathway; L-homocysteine from O-acetyl-L-homoserine. In terms of biological role, plays a role in inorganic sulfur assimilation during sulfur-limited conditions; catalyzes the conversion of O-acetyl-L-homoserine (OAH) into homocysteine in the methionine biosynthesis pathway. Also catalyzes the conversion of O-acetylserine (OAS) into cysteine, the last step in the cysteine biosynthesis pathway. However, it seems that in S.cerevisiae cysteine biosynthesis occurs exclusively through the cystathionine pathway and not via direct incorporation of sulfur into OAS. It therefore has no metabolic role in cysteine biosynthesis and may only have a regulatory role controlling OAS levels. The protein is Homocysteine/cysteine synthase of Saccharomyces cerevisiae (strain ATCC 204508 / S288c) (Baker's yeast).